Here is a 186-residue protein sequence, read N- to C-terminus: Biphenyl dioxygenase subunit beta (186 aa).

Belongs to the bacterial ring-hydroxylating dioxygenase beta subunit family. As to quaternary structure, heterohexamer consisting of 3 BphA subunits and 3 BphE subunits. A ferredoxin (BphF) and a ferredoxin reductase (BphG) must be present to obtain activity.

The enzyme catalyses biphenyl + NADH + O2 + H(+) = (2R,3S)-3-phenylcyclohexa-3,5-diene-1,2-diol + NAD(+). The protein operates within xenobiotic degradation; biphenyl degradation; 2-hydroxy-2,4-pentadienoate and benzoate from biphenyl: step 1/4. Its function is as follows. The beta subunit may be responsible for the substrate specificity of the enzyme. This Comamonas testosteroni (Pseudomonas testosteroni) protein is Biphenyl dioxygenase subunit beta (bphE).